We begin with the raw amino-acid sequence, 442 residues long: Putative nucleotide-sugar transporter YMD8 (442 aa).

Topologically, residues 1-3 are cytoplasmic; sequence MNR. Residues 4–24 form a helical membrane-spanning segment; sequence TVFLAFVFGWYFCSIALSIYN. Over 25–32 the chain is Extracellular; the sequence is RWMFDPKD. Residues 33 to 53 form a helical membrane-spanning segment; it reads GLGIGYPVLVTTFHQATLWLL. The Cytoplasmic portion of the chain corresponds to 54-76; that stretch reads SGIYIKLRHKPVKNVLRKNNGFN. The helical transmembrane segment at 77–97 threads the bilayer; sequence WSFFLKFLLPTAVASAGDIGL. Residues 98–107 are Extracellular-facing; it reads SNVSFQYVPL. Residue N99 is glycosylated (N-linked (GlcNAc...) asparagine). Residues 108–128 traverse the membrane as a helical segment; sequence TIYTIIKSSSIAFVLLFGCIF. The Cytoplasmic segment spans residues 129 to 132; that stretch reads KLEK. A helical transmembrane segment spans residues 133–153; that stretch reads FHWKLALSVIIMFVGVALMVF. Residues 154 to 166 lie on the Extracellular side of the membrane; it reads KPSDSTSTKNDQA. A helical membrane pass occupies residues 167–187; sequence LVIFGSFLVLASSCLSGLRWV. Residues 188–254 lie on the Cytoplasmic side of the membrane; it reads YTQLMLRNNP…PIHTIHQLAP (67 aa). Residue S209 is modified to Phosphoserine. Residues 255–275 traverse the membrane as a helical segment; that stretch reads IMGITLLLTSLLVEKPFPGIF. Over 276–301 the chain is Extracellular; the sequence is SSSIFRLDTSNGGVGTETTVLSIVRG. A helical transmembrane segment spans residues 302–322; the sequence is IVLLILPGFAVFLLTICEFSI. Over 323-329 the chain is Cytoplasmic; it reads LEQTPVL. Residues 330 to 350 traverse the membrane as a helical segment; sequence TVSIVGIVKELLTVIFGIIIL. At 351 to 355 the chain is on the extracellular side; that stretch reads SERLS. A helical transmembrane segment spans residues 356–376; the sequence is GFYNWLGMLIIMADVCYYNYF. The Cytoplasmic segment spans residues 377–442; sequence RYKQDLLQKY…QNVSRSSQQV (66 aa).

It belongs to the TPT transporter family. SLC35C subfamily.

Its subcellular location is the golgi apparatus membrane. It is found in the cytoplasmic vesicle. It localises to the COPI-coated vesicle membrane. The polypeptide is Putative nucleotide-sugar transporter YMD8 (YMD8) (Saccharomyces cerevisiae (strain ATCC 204508 / S288c) (Baker's yeast)).